A 143-amino-acid polypeptide reads, in one-letter code: Nucleoside diphosphate kinase (143 aa).

ATP-binding residues include Lys11, Phe59, Arg87, Thr93, Arg104, and Asn114. His117 serves as the catalytic Pros-phosphohistidine intermediate.

Belongs to the NDK family. In terms of assembly, homotetramer. Mg(2+) is required as a cofactor.

The protein localises to the cytoplasm. It carries out the reaction a 2'-deoxyribonucleoside 5'-diphosphate + ATP = a 2'-deoxyribonucleoside 5'-triphosphate + ADP. It catalyses the reaction a ribonucleoside 5'-diphosphate + ATP = a ribonucleoside 5'-triphosphate + ADP. Functionally, major role in the synthesis of nucleoside triphosphates other than ATP. The ATP gamma phosphate is transferred to the NDP beta phosphate via a ping-pong mechanism, using a phosphorylated active-site intermediate. In Ectopseudomonas mendocina (strain ymp) (Pseudomonas mendocina), this protein is Nucleoside diphosphate kinase.